We begin with the raw amino-acid sequence, 490 residues long: Subtilisin-like protease 8 (490 aa).

The first 26 residues, 1–26, serve as a signal peptide directing secretion; it reads MKGLLSLSVLPVLAYASPMIVDSIHQ. The propeptide occupies 27 to 134; sequence DAAPILSSTN…YIERDSEVRA (108 aa). The region spanning 43–133 is the Inhibitor I9 domain; it reads SYIVVFKKGV…EYIERDSEVR (91 aa). Positions 144-450 constitute a Peptidase S8 domain; it reads PWGLARISHR…GGSDNYKEIV (307 aa). Active-site charge relay system residues include Asp180 and His212. Asn282 is a glycosylation site (N-linked (GlcNAc...) asparagine). The Charge relay system role is filled by Ser378. An N-linked (GlcNAc...) asparagine glycan is attached at Asn455.

It belongs to the peptidase S8 family.

The protein localises to the secreted. Its function is as follows. Secreted subtilisin-like serine protease with keratinolytic activity that contributes to pathogenicity. The chain is Subtilisin-like protease 8 (SUB8) from Arthroderma otae (strain ATCC MYA-4605 / CBS 113480) (Microsporum canis).